A 337-amino-acid chain; its full sequence is S-adenosylmethionine:tRNA ribosyltransferase-isomerase (337 aa).

The protein belongs to the QueA family. As to quaternary structure, monomer.

The protein resides in the cytoplasm. It catalyses the reaction 7-aminomethyl-7-carbaguanosine(34) in tRNA + S-adenosyl-L-methionine = epoxyqueuosine(34) in tRNA + adenine + L-methionine + 2 H(+). It functions in the pathway tRNA modification; tRNA-queuosine biosynthesis. Functionally, transfers and isomerizes the ribose moiety from AdoMet to the 7-aminomethyl group of 7-deazaguanine (preQ1-tRNA) to give epoxyqueuosine (oQ-tRNA). The sequence is that of S-adenosylmethionine:tRNA ribosyltransferase-isomerase from Legionella pneumophila (strain Paris).